A 124-amino-acid polypeptide reads, in one-letter code: Fluoride-specific ion channel FluC 2 (124 aa).

Helical transmembrane passes span 8–28 (LPNQ…GALV), 34–54 (NDLL…GLPF), 60–80 (LLLG…MVEC), and 93–113 (LGLI…GFLI). 2 residues coordinate Na(+): Gly-68 and Thr-71.

This sequence belongs to the fluoride channel Fluc/FEX (TC 1.A.43) family.

It localises to the cell inner membrane. The enzyme catalyses fluoride(in) = fluoride(out). With respect to regulation, na(+) is not transported, but it plays an essential structural role and its presence is essential for fluoride channel function. In terms of biological role, fluoride-specific ion channel. Important for reducing fluoride concentration in the cell, thus reducing its toxicity. The polypeptide is Fluoride-specific ion channel FluC 2 (Prochlorococcus marinus (strain MIT 9313)).